Reading from the N-terminus, the 249-residue chain is MWIGVISLFPEMFRAITEHGVTGRAVKSGLLQIECWNPREFTHDKHRTVDDRPYGGGPGMLMMVQPLRDAIHAAKQAAGDGAKVIYLSPQGRKLTQAGVTELATNQKLILVAGRYEGIDERVIQTEVDEEWSIGDYVLSGGELPAMTLIDAVSRLVPGVLGDQASAEQDSFTDGLLDHPHYTRPELLDGLAVPEALTSGNHEVIRRWRLKQSLGRTWQRRPELINNLALTDEQESLLAEYVREVRDSVK.

S-adenosyl-L-methionine contacts are provided by residues Gly113 and 133-138 (IGDYVL).

It belongs to the RNA methyltransferase TrmD family. In terms of assembly, homodimer.

It localises to the cytoplasm. It catalyses the reaction guanosine(37) in tRNA + S-adenosyl-L-methionine = N(1)-methylguanosine(37) in tRNA + S-adenosyl-L-homocysteine + H(+). In terms of biological role, specifically methylates guanosine-37 in various tRNAs. This is tRNA (guanine-N(1)-)-methyltransferase from Aeromonas salmonicida (strain A449).